The chain runs to 504 residues: Anaerobic nitric oxide reductase transcription regulator NorR (504 aa).

4-aspartylphosphate is present on Asp57. The region spanning Met187–Val416 is the Sigma-54 factor interaction domain. Residues Gly215–Glu222 and Ala278–Glu287 contribute to the ATP site. Residues Trp479–Lys498 constitute a DNA-binding region (H-T-H motif).

It participates in nitrogen metabolism; nitric oxide reduction. Its function is as follows. Required for the expression of anaerobic nitric oxide (NO) reductase, acts as a transcriptional activator for at least the norVW operon. Activation also requires sigma-54. This is Anaerobic nitric oxide reductase transcription regulator NorR from Escherichia coli O45:K1 (strain S88 / ExPEC).